Consider the following 108-residue polypeptide: Urease subunit beta (108 aa).

Belongs to the urease beta subunit family. In terms of assembly, heterotrimer of UreA (gamma), UreB (beta) and UreC (alpha) subunits. Three heterotrimers associate to form the active enzyme.

Its subcellular location is the cytoplasm. It carries out the reaction urea + 2 H2O + H(+) = hydrogencarbonate + 2 NH4(+). It participates in nitrogen metabolism; urea degradation; CO(2) and NH(3) from urea (urease route): step 1/1. The polypeptide is Urease subunit beta (Proteus hauseri).